The following is a 369-amino-acid chain: Flagellar P-ring protein (369 aa).

The N-terminal stretch at 1–24 is a signal peptide; the sequence is MKTLHRCIGVALLALGALAGTAHA.

This sequence belongs to the FlgI family. As to quaternary structure, the basal body constitutes a major portion of the flagellar organelle and consists of four rings (L,P,S, and M) mounted on a central rod.

It localises to the periplasm. The protein localises to the bacterial flagellum basal body. In terms of biological role, assembles around the rod to form the L-ring and probably protects the motor/basal body from shearing forces during rotation. The polypeptide is Flagellar P-ring protein (Ralstonia nicotianae (strain ATCC BAA-1114 / GMI1000) (Ralstonia solanacearum)).